The following is a 225-amino-acid chain: Ribose-5-phosphate isomerase A (225 aa).

Residues 1 to 20 are disordered; sequence MKQSGGTEAQKRRAGKQAAD. Substrate-binding positions include 32–35, 86–89, and 98–101; these read TGST, DGAD, and KGGG. Glutamate 107 serves as the catalytic Proton acceptor. Lysine 125 provides a ligand contact to substrate.

This sequence belongs to the ribose 5-phosphate isomerase family. As to quaternary structure, homodimer.

It catalyses the reaction aldehydo-D-ribose 5-phosphate = D-ribulose 5-phosphate. Its pathway is carbohydrate degradation; pentose phosphate pathway; D-ribose 5-phosphate from D-ribulose 5-phosphate (non-oxidative stage): step 1/1. Functionally, catalyzes the reversible conversion of ribose-5-phosphate to ribulose 5-phosphate. This is Ribose-5-phosphate isomerase A from Natronomonas pharaonis (strain ATCC 35678 / DSM 2160 / CIP 103997 / JCM 8858 / NBRC 14720 / NCIMB 2260 / Gabara) (Halobacterium pharaonis).